A 394-amino-acid chain; its full sequence is ATP phosphoribosyltransferase regulatory subunit (394 aa).

This sequence belongs to the class-II aminoacyl-tRNA synthetase family. HisZ subfamily. In terms of assembly, heteromultimer composed of HisG and HisZ subunits.

Its subcellular location is the cytoplasm. It functions in the pathway amino-acid biosynthesis; L-histidine biosynthesis; L-histidine from 5-phospho-alpha-D-ribose 1-diphosphate: step 1/9. Functionally, required for the first step of histidine biosynthesis. May allow the feedback regulation of ATP phosphoribosyltransferase activity by histidine. The polypeptide is ATP phosphoribosyltransferase regulatory subunit (Pseudomonas aeruginosa (strain LESB58)).